Reading from the N-terminus, the 897-residue chain is MDGAAGPGEGPAHETLQTLSQRLRVQEEEMELVKAALAEALRLLRLHGSTTTLQGSGISAPTRNSSITVPPGLPPTCSPSLVTRGTQTEEELEIVPSSGPPGLSNGPPALQGGSEEPSGTQSEGGCSSSSGAGSPGPPGILRPVQPLQRSDTPRRNSSSSSSPSERPRQKLSRKAASSANLLLRSGSTESRGNKDPLSSPGGPGSRRSNYNLEGISVKMFLRGRPITMYIPSGIRSLEELPSGPPPETLSLDWVYGYRGRDSRSNLFVLRSGEVVYFIACVVVLYRPGGGPGGPGGGGQRHYRGHTDCVRCLAVHPDGVRVASGQTAGVDKDGKPLQPVVHIWDSETLLKLQEIGLGAFERGVGALAFSAADQGAFLCVVDDSNEHMLSVWDCSRGVKLAEIKSTNDSVLAVGFSPRDSSCIVTSGKSHVHFWNWSGGTGAPGNGLLARKQGVFGKYKKPKFIPCFVFLPDGDILTGDSEGNILTWGRSVSDSKTPGRGGAKETYTIVAQAHAHEGSIFALCLRRDGTVLSGGGRDRRLVQWGPGLVALQEAEIPEHFGAVRAIAEGLGSELLVGTTKNALLRGDLAQGFSPVIQGHTDELWGLCTHPSQNRFLTCGHDRQLCLWDGEGHALAWSMDLKETGLCADFHPSGAVVVVGLNTGRWLVLDTETREIVSDVTDGNEQLSVVRYSPDGLYLAIGSHDNMIYIYSVSSCGTKSSRFGRCMGHSSFITHLDWSKDGNFIMSNSGDYEILYWDVAGGCKLLRNRYESRDREWATYTCVLGFHVYGVWPDGSDGTDINSLCRSHNERVVAVADDFCKVHLFQYPCARAKAPSRMYSGHGSHVTSVRFTHDDSYLVSLGGKDASIFQWRVLGAGSSGPAPATPSRTPSLSPASSLDV.

N-acetylmethionine is present on methionine 1. A coiled-coil region spans residues 16–43; the sequence is LQTLSQRLRVQEEEMELVKAALAEALRL. Over residues 51 to 68 the composition is skewed to polar residues; sequence TTLQGSGISAPTRNSSIT. The interval 51–210 is disordered; the sequence is TTLQGSGISA…GGPGSRRSNY (160 aa). 3 stretches are compositionally biased toward low complexity: residues 96–108, 118–132, and 155–164; these read PSSG…NGPP, SGTQ…SSGA, and RNSSSSSSPS. A compositionally biased stretch (polar residues) spans 175–190; it reads AASSANLLLRSGSTES. A phosphoserine mark is found at serine 177, serine 199, and serine 205. WD repeat units lie at residues 235–287, 296–345, 351–393, 399–435, 449–488, 505–544, 550–585, 590–627, 630–668, 675–710, 717–756, 766–824, and 831–870; these read RSLE…LYRP, GGGQ…IWDS, LQEI…VWDC, LAEI…FWNW, RKQG…TWGR, YTIV…QWGP, QEAE…LRGD, FSPV…LWDG, HALA…VLDT, SDVT…IYSV, SSRF…YWDV, RYES…LFQY, and APSR…QWRV. The tract at residues 876-897 is disordered; the sequence is SGPAPATPSRTPSLSPASSLDV. The residue at position 882 (threonine 882) is a Phosphothreonine; by CDK1. A compositionally biased stretch (polar residues) spans 883–897; it reads PSRTPSLSPASSLDV. Serine 884 carries the phosphoserine modification.

Belongs to the WD repeat EMAP family. In terms of assembly, homotrimer; self-association is mediated by the N-terminal coiled coil. Interacts with EML2 but not with EML1. Interacts (phosphorylated at Thr-882) with TUBG1, HAUS1, HAUS2, HAUS3, HAUS4, HAUS5, HAUS6, HAUS7 and HAUS8. In terms of processing, phosphorylation at Thr-882 during mitosis is required for interaction with TUBG1, HAUS1, HAUS2, HAUS3, HAUS4, HAUS5, HAUS6, HAUS7 and HAUS8 and their recruitment to spindle microtubules.

The protein localises to the cytoplasm. It localises to the cytoskeleton. The protein resides in the nucleus. Its subcellular location is the midbody. It is found in the spindle. Regulates mitotic spindle assembly, microtubule (MT)-kinetochore attachment and chromosome separation via recruitment of HAUS augmin-like complex and TUBG1 to the existing MTs and promoting MT-based MT nucleation. Required for proper alignnment of chromosomes during metaphase. This is Echinoderm microtubule-associated protein-like 3 (Eml3) from Mus musculus (Mouse).